We begin with the raw amino-acid sequence, 155 residues long: MKLLIVAVGQHVPDWAQTAYDDYAKRFPPELKVELKAVKTEPRGSKTVETLYAAERKRIEAAIPRGTRIVVLDERGTNLTTKALAQRLQGWQLEGDDVALIIGGPDGLDPAFRQAAHERIRLSDLTLPHAMVRVLLIEQLYRAWSVNAGHPYHRE.

S-adenosyl-L-methionine is bound by residues Leu72, Gly103, and 122 to 127 (LSDLTL).

The protein belongs to the RNA methyltransferase RlmH family. Homodimer.

The protein localises to the cytoplasm. The enzyme catalyses pseudouridine(1915) in 23S rRNA + S-adenosyl-L-methionine = N(3)-methylpseudouridine(1915) in 23S rRNA + S-adenosyl-L-homocysteine + H(+). Functionally, specifically methylates the pseudouridine at position 1915 (m3Psi1915) in 23S rRNA. The protein is Ribosomal RNA large subunit methyltransferase H of Delftia acidovorans (strain DSM 14801 / SPH-1).